The following is a 208-amino-acid chain: Protein GrpE (208 aa).

The segment covering 1 to 12 (MTNKDESVKKNT) has biased composition (basic and acidic residues). Positions 1-51 (MTNKDESVKKNTESTVEETNVKQNIDDSVEQAEESKGHLQDEAIEETSDEN) are disordered. Polar residues predominate over residues 13–23 (ESTVEETNVKQ). Positions 42–51 (EAIEETSDEN) are enriched in acidic residues.

Belongs to the GrpE family. Homodimer.

It is found in the cytoplasm. In terms of biological role, participates actively in the response to hyperosmotic and heat shock by preventing the aggregation of stress-denatured proteins, in association with DnaK and GrpE. It is the nucleotide exchange factor for DnaK and may function as a thermosensor. Unfolded proteins bind initially to DnaJ; upon interaction with the DnaJ-bound protein, DnaK hydrolyzes its bound ATP, resulting in the formation of a stable complex. GrpE releases ADP from DnaK; ATP binding to DnaK triggers the release of the substrate protein, thus completing the reaction cycle. Several rounds of ATP-dependent interactions between DnaJ, DnaK and GrpE are required for fully efficient folding. This is Protein GrpE from Staphylococcus aureus (strain COL).